The following is an 815-amino-acid chain: Phenylalanine--tRNA ligase beta subunit (815 aa).

The 110-residue stretch at 39–148 (ATELQKFEVA…EYAVVGDNFT (110 aa)) folds into the tRNA-binding domain. The B5 domain occupies 420–495 (LQKIPLDFSV…RIYGYDKIES (76 aa)). Mg(2+) is bound by residues aspartate 473, aspartate 479, glutamate 482, and glutamate 483. The region spanning 721 to 814 (SDFQANFRDY…ISQKFQGTLR (94 aa)) is the FDX-ACB domain.

Belongs to the phenylalanyl-tRNA synthetase beta subunit family. Type 1 subfamily. Tetramer of two alpha and two beta subunits. The cofactor is Mg(2+).

It localises to the cytoplasm. It catalyses the reaction tRNA(Phe) + L-phenylalanine + ATP = L-phenylalanyl-tRNA(Phe) + AMP + diphosphate + H(+). This is Phenylalanine--tRNA ligase beta subunit from Rickettsia typhi (strain ATCC VR-144 / Wilmington).